The primary structure comprises 1114 residues: Kinesin-like protein KIN-12F (1114 aa).

Positions 1–84 (MADNRIAGSL…RSQVSASRPR (84 aa)) are disordered. 2 stretches are compositionally biased toward polar residues: residues 10–39 (LPTS…SNPD) and 48–80 (PNIH…QVSA). The region spanning 104–436 (HVKVVVRIKP…LRFGERAKAM (333 aa)) is the Kinesin motor domain. 175–182 (GQNGSGKT) lines the ATP pocket. Coiled coils occupy residues 761–791 (QQEL…QTED), 872–942 (ARSF…LRRA), and 1038–1081 (EVLV…HKLE). The interval 1092-1114 (NTLPESALQPLHQRNSAIEEEGM) is disordered.

This sequence belongs to the TRAFAC class myosin-kinesin ATPase superfamily. Kinesin family. KIN-12 subfamily.

This Arabidopsis thaliana (Mouse-ear cress) protein is Kinesin-like protein KIN-12F.